The following is a 358-amino-acid chain: DNA integrity scanning protein DisA (358 aa).

The 139-residue stretch at 6–144 (RPTLREAVAR…RGERHVLTDS (139 aa)) folds into the DAC domain. Residues Gly-73, Leu-91, and 104 to 108 (TRHRS) each bind ATP.

Belongs to the DisA family. Homooctamer. It depends on Mg(2+) as a cofactor.

It catalyses the reaction 2 ATP = 3',3'-c-di-AMP + 2 diphosphate. Its function is as follows. Participates in a DNA-damage check-point. DisA forms globular foci that rapidly scan along the chromosomes searching for lesions. In terms of biological role, also has diadenylate cyclase activity, catalyzing the condensation of 2 ATP molecules into cyclic di-AMP (c-di-AMP). c-di-AMP likely acts as a signaling molecule that may couple DNA integrity with a cellular process. This Mycobacterium tuberculosis (strain ATCC 25177 / H37Ra) protein is DNA integrity scanning protein DisA.